The primary structure comprises 1024 residues: Beta-galactosidase (1024 aa).

The substrate site is built by N103 and D202. D202 provides a ligand contact to Na(+). Mg(2+)-binding residues include E417, H419, and E462. Substrate-binding positions include E462 and E538 to H541. E462 acts as the Proton donor in catalysis. E538 acts as the Nucleophile in catalysis. N598 is a Mg(2+) binding site. Residues F602 and N605 each coordinate Na(+). Substrate is bound by residues N605 and W1000.

The protein belongs to the glycosyl hydrolase 2 family. In terms of assembly, homotetramer. Requires Mg(2+) as cofactor. It depends on Na(+) as a cofactor.

The enzyme catalyses Hydrolysis of terminal non-reducing beta-D-galactose residues in beta-D-galactosides.. This is Beta-galactosidase from Klebsiella pneumoniae.